A 149-amino-acid chain; its full sequence is UPF0178 protein lwe1471 (149 aa).

It belongs to the UPF0178 family.

This Listeria welshimeri serovar 6b (strain ATCC 35897 / DSM 20650 / CCUG 15529 / CIP 8149 / NCTC 11857 / SLCC 5334 / V8) protein is UPF0178 protein lwe1471.